We begin with the raw amino-acid sequence, 283 residues long: MARHDPNPFADEEINPFANHTSVPPASNSYLKPLPPEPYDRGATVDIPLDSGNDLRAKEMELQAKENELKRKEQELKRREDAIARTGVVIEEKNWPEFFPLIHHDIPNEIPIHLQKIQYVAFTTLLGLVGCLLWNIVAVTVAWIKGEGPTIWLLSIIYFLAGVPGAYVLWYRPLYRATRTDSALKFGAFFFFYVFHIAFCGFAAVAPPVIFQGKSLTGFLPAIELLTTNAAVGIMYFIGAGFFCIETLLNIWVIQQVYAYFRGSGKAAEMKREATKSTLMRAL.

The disordered stretch occupies residues 1-47 (MARHDPNPFADEEINPFANHTSVPPASNSYLKPLPPEPYDRGATVDI). The Cytoplasmic portion of the chain corresponds to 1–123 (MARHDPNPFA…LQKIQYVAFT (123 aa)). The span at 18–30 (ANHTSVPPASNSY) shows a compositional bias: polar residues. Positions 50-87 (DSGNDLRAKEMELQAKENELKRKEQELKRREDAIARTG) form a coiled coil. Transmembrane regions (helical) follow at residues 124 to 144 (TLLGLVGCLLWNIVAVTVAWI), 151 to 171 (IWLLSIIYFLAGVPGAYVLWY), 186 to 206 (FGAFFFFYVFHIAFCGFAAVA), and 234 to 254 (IMYFIGAGFFCIETLLNIWVI). The Cytoplasmic portion of the chain corresponds to 255-283 (QQVYAYFRGSGKAAEMKREATKSTLMRAL).

The protein belongs to the SCAMP family.

Its subcellular location is the cell membrane. The protein localises to the cytoplasmic vesicle. It is found in the secretory vesicle membrane. In terms of biological role, probably involved in membrane trafficking. The polypeptide is Secretory carrier-associated membrane protein 2 (SCAMP2) (Arabidopsis thaliana (Mouse-ear cress)).